The sequence spans 297 residues: Oxidoreductase R1 (297 aa).

Belongs to the asaB hydroxylase/desaturase family.

The protein operates within secondary metabolite biosynthesis. In terms of biological role, oxidoreductase; part of the gene cluster that mediates the biosynthesis of squalestatin S1 (SQS1, also known as zaragozic acid A), a heavily oxidized fungal polyketide that offers potent cholesterol lowering activity by targeting squalene synthase (SS). SQS1 is composed of a 2,8-dioxobicyclic[3.2.1]octane-3,4,5-tricarboxyclic acid core that is connected to two lipophilic polyketide arms. These initial steps feature the priming of an unusual benzoic acid starter unit onto the highly reducing polyketide synthase pks2, followed by oxaloacetate extension and product release to generate a tricarboxylic acid containing product. The phenylalanine ammonia lyase (PAL) M7 and the acyl-CoA ligase M9 are involved in transforming phenylalanine into benzoyl-CoA. The citrate synthase-like protein R3 is involved in connecting the C-alpha-carbons of the hexaketide chain and oxaloacetate to afford the tricarboxylic acid unit. The potential hydrolytic enzymes, M8 and M10, are in close proximity to pks2 and may participate in product release. On the other side, the tetraketide arm is synthesized by a the squalestatin tetraketide synthase pks1 and enzymatically esterified to the core in the last biosynthetic step, by the acetyltransferase M4. The biosynthesis of the tetraketide must involve 3 rounds of chain extension. After the first and second rounds methyl-transfer occurs, and in all rounds of extension the ketoreductase and dehydratase are active. The enoyl reductase and C-MeT of pks1 are not active in the final round of extension. The acetyltransferase M4 appears to have a broad substrate selectivity for its acyl CoA substrate, allowing the in vitro synthesis of novel squalestatins. The biosynthesis of SQS1 requires several oxidative steps likely performed by oxidoreductases M1, R1 and R2. Finally, in support of the identification of the cluster as being responsible for SQS1 production, the cluster contains a gene encoding a putative squalene synthase (SS) R6, suggesting a likely mechanism for self-resistance. The polypeptide is Oxidoreductase R1 (Phoma sp. (strain ATCC 20986 / MF5453)).